Here is a 303-residue protein sequence, read N- to C-terminus: Glycine betaine/carnitine/choline-binding protein OpuCC (303 aa).

A signal peptide spans 1 to 20 (MTKIKWLGAFALVFVMLLGG). C21 is lipidated: N-palmitoyl cysteine. A lipid anchor (S-diacylglycerol cysteine) is attached at C21.

This sequence belongs to the OsmX family. As to quaternary structure, the complex is composed of two ATP-binding proteins (OpuCA), two transmembrane proteins (OpuCB and OpuCD) and a solute-binding protein (OpuCC).

Its subcellular location is the cell membrane. Member of a high affinity multicomponent binding-protein-dependent transport system for glycine betaine, carnitine, and choline. The chain is Glycine betaine/carnitine/choline-binding protein OpuCC (opuCC) from Bacillus subtilis (strain 168).